Reading from the N-terminus, the 113-residue chain is Retrotransposon Gag-like protein 8B (113 aa).

The protein belongs to the FAM127 family.

In Homo sapiens (Human), this protein is Retrotransposon Gag-like protein 8B (RTL8B).